Reading from the N-terminus, the 438-residue chain is Trigger factor (438 aa).

The 86-residue stretch at 163 to 248 (GDIITIDYEG…VKEIKRKELA (86 aa)) folds into the PPIase FKBP-type domain.

Belongs to the FKBP-type PPIase family. Tig subfamily.

The protein localises to the cytoplasm. It catalyses the reaction [protein]-peptidylproline (omega=180) = [protein]-peptidylproline (omega=0). Functionally, involved in protein export. Acts as a chaperone by maintaining the newly synthesized protein in an open conformation. Functions as a peptidyl-prolyl cis-trans isomerase. In Desulforudis audaxviator (strain MP104C), this protein is Trigger factor.